Reading from the N-terminus, the 978-residue chain is Glycine dehydrogenase (decarboxylating) (978 aa).

An N6-(pyridoxal phosphate)lysine modification is found at K726.

Belongs to the GcvP family. In terms of assembly, the glycine cleavage system is composed of four proteins: P, T, L and H. Pyridoxal 5'-phosphate is required as a cofactor.

It catalyses the reaction N(6)-[(R)-lipoyl]-L-lysyl-[glycine-cleavage complex H protein] + glycine + H(+) = N(6)-[(R)-S(8)-aminomethyldihydrolipoyl]-L-lysyl-[glycine-cleavage complex H protein] + CO2. The glycine cleavage system catalyzes the degradation of glycine. The P protein binds the alpha-amino group of glycine through its pyridoxal phosphate cofactor; CO(2) is released and the remaining methylamine moiety is then transferred to the lipoamide cofactor of the H protein. The chain is Glycine dehydrogenase (decarboxylating) from Paraburkholderia xenovorans (strain LB400).